A 466-amino-acid polypeptide reads, in one-letter code: Alpha-1,3-mannosyltransferase CMT1 (466 aa).

A disordered region spans residues methionine 1 to serine 23. Residues methionine 1–serine 33 are Cytoplasmic-facing. The chain crosses the membrane as a helical; Signal-anchor for type II membrane protein span at residues proline 34 to proline 54. The Lumenal portion of the chain corresponds to aspartate 55 to glutamate 466.

Requires Mg(2+) as cofactor. Mn(2+) serves as cofactor. It depends on Co(2+) as a cofactor.

Its subcellular location is the golgi apparatus membrane. It participates in protein modification; protein glycosylation. Its function is as follows. Responsible for addition of mannose residues in an alpha-1,3 linkage to a polymannosly precursor. May be involved in synthesis of capsule glucuronoxylomannan. This chain is Alpha-1,3-mannosyltransferase CMT1, found in Cryptococcus neoformans var. neoformans serotype D (strain JEC21 / ATCC MYA-565) (Filobasidiella neoformans).